We begin with the raw amino-acid sequence, 106 residues long: Iron-sulfur cluster assembly protein CyaY (106 aa).

The protein belongs to the frataxin family.

Its function is as follows. Involved in iron-sulfur (Fe-S) cluster assembly. May act as a regulator of Fe-S biogenesis. This Yersinia pestis bv. Antiqua (strain Antiqua) protein is Iron-sulfur cluster assembly protein CyaY.